A 331-amino-acid chain; its full sequence is D-alanine--D-alanine ligase (331 aa).

The ATP-grasp domain occupies 116–316; sequence KRQWQTHGLP…YEDFVLQLAA (201 aa). 142–197 is an ATP binding site; that stretch reads ADRLGLPLIVKPAREGSSIGLTKVTSVAELPAAYEKAARLDRDVMAEQFIEGDELT. 3 residues coordinate Mg(2+): Asp269, Glu283, and Asn285.

Belongs to the D-alanine--D-alanine ligase family. It depends on Mg(2+) as a cofactor. Requires Mn(2+) as cofactor.

Its subcellular location is the cytoplasm. The enzyme catalyses 2 D-alanine + ATP = D-alanyl-D-alanine + ADP + phosphate + H(+). The protein operates within cell wall biogenesis; peptidoglycan biosynthesis. In terms of biological role, cell wall formation. This chain is D-alanine--D-alanine ligase, found in Ralstonia pickettii (strain 12J).